A 569-amino-acid chain; its full sequence is Sugar transporter STL1 (569 aa).

The Cytoplasmic portion of the chain corresponds to 1–29 (MKDLKLSNFKGKFISRTSHWGLTGKKLRY). Residues 30-50 (FITIASMTGFSLFGYDQGLMA) traverse the membrane as a helical segment. Residues 51 to 79 (SLITGKQFNYEFPATKENGDHDRHATVVQ) lie on the Extracellular side of the membrane. The chain crosses the membrane as a helical span at residues 80-100 (GATTSCYELGCFAGSLFVMFC). Over 101–107 (GERIGRK) the chain is Cytoplasmic. Residues 108-128 (PLILMGSVITIIGAVISTCAF) form a helical membrane-spanning segment. Residue Arg-129 is a topological domain, extracellular. The chain crosses the membrane as a helical span at residues 130–150 (GYWALGQFIIGRVVTGVGTGL). At 151-168 (NTSTIPVWQSEMSKAENR) the chain is on the cytoplasmic side. The chain crosses the membrane as a helical span at residues 169 to 189 (GLLVNLEGSTIAFGTMIAYWI). The Extracellular portion of the chain corresponds to 190 to 203 (DFGLSYTNSSVQWR). Residue Asn-197 is glycosylated (N-linked (GlcNAc...) asparagine). A helical membrane pass occupies residues 204-224 (FPVSMQIVFALFLLAFMIKLP). Topologically, residues 225–291 (ESPRWLISQS…SRGRSQNLQR (67 aa)) are cytoplasmic. Residues 292–312 (ALIAASTQFFQQFTGCNAAIY) traverse the membrane as a helical segment. The Extracellular segment spans residues 313–330 (YSTVLFNKTIKLDYRLSM). Asn-319 is a glycosylation site (N-linked (GlcNAc...) asparagine). Residues 331 to 351 (IIGGVFATIYALSTIGSFFLI) form a helical membrane-spanning segment. At 352–358 (EKLGRRK) the chain is on the cytoplasmic side. The chain crosses the membrane as a helical span at residues 359 to 379 (LFLLGATGQAVSFTITFACLV). Over 380-389 (KENKENARGA) the chain is Extracellular. A helical transmembrane segment spans residues 390–410 (AVGLFLFITFFGLSLLSLPWI). At 411–426 (YPPEIASMKVRASTNA) the chain is on the cytoplasmic side. Residues 427 to 447 (FSTCTNWLCNFAVVMFTPIFI) traverse the membrane as a helical segment. At 448–453 (GQSGWG) the chain is on the extracellular side. Residues 454–474 (CYLFFAVMNYLYIPVIFFFYP) traverse the membrane as a helical segment. Over 475–569 (ETAGRSLEEI…TVNDKANFEG (95 aa)) the chain is Cytoplasmic. Acidic residues predominate over residues 524 to 533 (DDEMEKEDFG). Residues 524–569 (DDEMEKEDFGEDRVEDTYNQINGDNSSSSSNIKNEDTVNDKANFEG) form a disordered region. Basic and acidic residues predominate over residues 556–569 (KNEDTVNDKANFEG).

The protein belongs to the major facilitator superfamily. Sugar transporter (TC 2.A.1.1) family.

It is found in the membrane. The protein is Sugar transporter STL1 (STL1) of Saccharomyces cerevisiae (strain ATCC 204508 / S288c) (Baker's yeast).